Consider the following 75-residue polypeptide: Putative snRNP Sm-like protein (75 aa).

Residues 4 to 75 enclose the Sm domain; it reads RPLDVIHRSL…NVLAISPTEE (72 aa).

Belongs to the snRNP Sm proteins family.

The protein is Putative snRNP Sm-like protein of Pyrococcus abyssi (strain GE5 / Orsay).